We begin with the raw amino-acid sequence, 302 residues long: tRNA dimethylallyltransferase (302 aa).

7–14 (GPTASGKS) lines the ATP pocket. 9–14 (TASGKS) serves as a coordination point for substrate. Interaction with substrate tRNA regions lie at residues 32–35 (DSMQ) and 156–160 (QRILR).

Belongs to the IPP transferase family. In terms of assembly, monomer. Requires Mg(2+) as cofactor.

The catalysed reaction is adenosine(37) in tRNA + dimethylallyl diphosphate = N(6)-dimethylallyladenosine(37) in tRNA + diphosphate. Functionally, catalyzes the transfer of a dimethylallyl group onto the adenine at position 37 in tRNAs that read codons beginning with uridine, leading to the formation of N6-(dimethylallyl)adenosine (i(6)A). This chain is tRNA dimethylallyltransferase, found in Beijerinckia indica subsp. indica (strain ATCC 9039 / DSM 1715 / NCIMB 8712).